Here is a 210-residue protein sequence, read N- to C-terminus: Endonuclease III (210 aa).

A HhH domain is found at 108-127 (FKALIKLPGVGRKTANVVLN). Residues cysteine 187, cysteine 194, cysteine 197, and cysteine 203 each coordinate [4Fe-4S] cluster.

It belongs to the Nth/MutY family. It depends on [4Fe-4S] cluster as a cofactor.

The catalysed reaction is 2'-deoxyribonucleotide-(2'-deoxyribose 5'-phosphate)-2'-deoxyribonucleotide-DNA = a 3'-end 2'-deoxyribonucleotide-(2,3-dehydro-2,3-deoxyribose 5'-phosphate)-DNA + a 5'-end 5'-phospho-2'-deoxyribonucleoside-DNA + H(+). DNA repair enzyme that has both DNA N-glycosylase activity and AP-lyase activity. The DNA N-glycosylase activity releases various damaged pyrimidines from DNA by cleaving the N-glycosidic bond, leaving an AP (apurinic/apyrimidinic) site. The AP-lyase activity cleaves the phosphodiester bond 3' to the AP site by a beta-elimination, leaving a 3'-terminal unsaturated sugar and a product with a terminal 5'-phosphate. This chain is Endonuclease III, found in Rickettsia conorii (strain ATCC VR-613 / Malish 7).